The primary structure comprises 1940 residues: Myosin-3 (1940 aa).

Residues 33 to 82 form the Myosin N-terminal SH3-like domain; sequence DAKTYCFVVDSKEEYVKGKIKSSQDGKVTVETEDSRTLVVKPEDVYAMNP. The 694-residue stretch at 86 to 779 folds into the Myosin motor domain; it reads DKIEDMAMLT…LLGTLEEMRD (694 aa). N6,N6,N6-trimethyllysine is present on Lys130. 179–186 serves as a coordination point for ATP; it reads GESGAGKT. Actin-binding regions lie at residues 656 to 678 and 758 to 772; these read LNKL…IPNE and KFGH…GLLG. The region spanning 782–811 is the IQ domain; it reads LAKLITRTQAVCRGFLMRVEFQKMMQRRES. The stretch at 841–1928 forms a coiled coil; the sequence is LKSAETEKEM…NKLRAKTRDF (1088 aa). The interval 1260 to 1289 is disordered; the sequence is ARGKNEEMQRSLSELTTQKSRLQTEAGELS. A compositionally biased stretch (polar residues) spans 1269–1282; the sequence is RSLSELTTQKSRLQ.

Belongs to the TRAFAC class myosin-kinesin ATPase superfamily. Myosin family. Muscle myosin is a hexameric protein that consists of 2 heavy chain subunits (MHC), 2 alkali light chain subunits (MLC) and 2 regulatory light chain subunits (MLC-2).

It localises to the cytoplasm. It is found in the myofibril. Its function is as follows. Muscle contraction. The polypeptide is Myosin-3 (Myh3) (Mus musculus (Mouse)).